The following is a 731-amino-acid chain: Gelsolin (731 aa).

The actin-severing stretch occupies residues 2–125 (VVEHPEFLKA…YKKGGVASGF (124 aa)). A Gelsolin-like 1 repeat occupies 25-107 (FDLVPVPPNL…VQGFESATFL (83 aa)). Phosphotyrosine is present on tyrosine 35. Residues glycine 41, aspartate 42, glutamate 73, aspartate 85, glycine 90, and alanine 92 each coordinate Ca(2+). The segment at 72 to 75 (DESG) is actin-actin interfilament contact point. 111–118 (KSGLKYKK) contributes to the a 1,2-diacyl-sn-glycero-3-phospho-(1D-myo-inositol-4,5-bisphosphate) binding site. Valine 121 serves as a coordination point for Ca(2+). 137 to 145 (RLLQVKGRR) serves as a coordination point for a 1,2-diacyl-sn-glycero-3-phospho-(1D-myo-inositol-4,5-bisphosphate). The Gelsolin-like 2 repeat unit spans residues 147–219 (VRATEVPVSW…FEEGAEPEAM (73 aa)). 2 residues coordinate Ca(2+): glycine 162 and aspartate 163. A disulfide bridge links cysteine 164 with cysteine 177. Residues glutamate 185, aspartate 235, glutamate 278, aspartate 279, and glutamate 303 each contribute to the Ca(2+) site. The Gelsolin-like 3 repeat unit spans residues 266–338 (DENPFAQGAL…LPEGGETPLF (73 aa)). 2 positions are modified to phosphotyrosine: tyrosine 358 and tyrosine 414. Residues 383-731 (AAQHGMDDDG…LDRALAELAA (349 aa)) form an actin-binding, Ca-sensitive region. The stretch at 404-485 (SNKVPVDPAT…VQGKEPAHLM (82 aa)) is one Gelsolin-like 4 repeat. 7 residues coordinate Ca(2+): glycine 420, aspartate 421, glutamate 451, aspartate 463, glycine 468, proline 470, and threonine 500. Lysine 533 bears the N6-acetyllysine mark. The stretch at 533 to 591 (KAGALNSNDAFVLKTPSAAYLWVGAGASEAEKTGAQELLRVLRAQPVQVAEGSEPDSFW) is one Gelsolin-like 5 repeat. The Ca(2+) site is built by asparagine 540 and aspartate 541. Phosphotyrosine is present on tyrosine 552. Glutamate 563 serves as a coordination point for Ca(2+). Residue tyrosine 600 is modified to Phosphotyrosine. A Gelsolin-like 6 repeat occupies 630 to 705 (IEEVPGEFMQ…VKQGFEPPSF (76 aa)). Aspartate 645, aspartate 646, and glutamate 668 together coordinate Ca(2+). The residue at position 691 (threonine 691) is a Phosphothreonine.

The protein belongs to the villin/gelsolin family. In terms of assembly, binds to actin and to fibronectin. Identified in a complex composed of ACTA1, COBL, GSN and TMSB4X. Interacts with the inactive form of EIF2AK2/PKR. Interacts with FLII.

The protein resides in the cytoplasm. It is found in the cytoskeleton. In terms of biological role, calcium-regulated, actin-modulating protein that binds to the plus (or barbed) ends of actin monomers or filaments, preventing monomer exchange (end-blocking or capping). It can promote the assembly of monomers into filaments (nucleation) as well as sever filaments already formed. Plays a role in ciliogenesis. The sequence is that of Gelsolin (GSN) from Equus caballus (Horse).